Reading from the N-terminus, the 461-residue chain is uncharacterized protein (461 aa).

2 disordered regions span residues 254–273 (NNNNNNNNNNNNNNNNNNNN) and 368–414 (QPSQ…NNNS). The segment covering 381-413 (NNNNNNNNNNNNNNNNNNNNNNNNNNNNNNNNN) has biased composition (low complexity).

This is an uncharacterized protein from Dictyostelium discoideum (Social amoeba).